The primary structure comprises 372 residues: Integral membrane protein GPR137B (372 aa).

The Lumenal portion of the chain corresponds to 1–32 (MESPAWDATKNDSLPPTLTPAVPPYVKLGLTT). An N-linked (GlcNAc...) asparagine glycan is attached at asparagine 11. Residues 33–53 (VYTIFYLLLFAFVYVQLWLVL) form a helical membrane-spanning segment. Topologically, residues 54 to 64 (HYKHKRFSYQT) are cytoplasmic. Residues 65-85 (VFLFLCLLWASLRAVLFSFYF) traverse the membrane as a helical segment. Residues 86–93 (RNFVEANR) lie on the Lumenal side of the membrane. A helical transmembrane segment spans residues 94 to 114 (LGAFTFWLLYCFPVCLQFFTL). Residues 115–144 (TLMNLYFARVIYKAKSKYLPELIKYRLPLY) are Cytoplasmic-facing. Residues 145 to 165 (LAFLVISLLFLVVNLTCAILV) form a helical membrane-spanning segment. The Lumenal segment spans residues 166 to 173 (KTDYAETK). The helical transmembrane segment at 174–194 (VIVSIRVAINDTLFVLCAVSL) threads the bilayer. Topologically, residues 195–222 (SVCLYKISKMSLAGVYLESKGSSVCQVT) are cytoplasmic. A helical transmembrane segment spans residues 223–243 (CIGVTVILLYTSRACYNLVVL). Topologically, residues 244–276 (SLSDSRYSSFDYDWYNVSDQADLKCKLGDAGYV) are lumenal. Residue asparagine 259 is glycosylated (N-linked (GlcNAc...) asparagine). The helical transmembrane segment at 277 to 297 (VFGIILFIWELFPTSLVVYFF) threads the bilayer. Residues 298–372 (RVRNSAQDMT…QTGSLQRDST (75 aa)) lie on the Cytoplasmic side of the membrane.

The protein belongs to the GPR137 family.

It is found in the lysosome membrane. Functionally, lysosomal integral membrane protein that regulates the localization and activity of mTORC1, a signaling complex promoting cell growth in response to growth factors, energy levels, and amino acids. Interacts with Rag GTPases and increases the lysosomial localization and activity of Rag GTPases and thereby regulates mTORC1 translocation and activity in lysosome. Involved in the regulation of lysosomal morphology and autophagy. Also acts as a negative regulator of osteoclast activity. Its function is as follows. Also acts as a negative regulator of osteoclast activity. This chain is Integral membrane protein GPR137B (gpr137b), found in Xenopus laevis (African clawed frog).